Here is a 166-residue protein sequence, read N- to C-terminus: Lipoprotein signal peptidase (166 aa).

4 consecutive transmembrane segments (helical) span residues 9–29, 45–65, 71–91, and 99–119; these read ASGA…FDQL, ALTS…FGFL, WQRW…CYLL, and LFSL…IDRL. Active-site residues include D126 and D144. A helical transmembrane segment spans residues 135–155; sequence WHFPAFNLADSAITVGAVLLI.

It belongs to the peptidase A8 family.

The protein resides in the cell inner membrane. It catalyses the reaction Release of signal peptides from bacterial membrane prolipoproteins. Hydrolyzes -Xaa-Yaa-Zaa-|-(S,diacylglyceryl)Cys-, in which Xaa is hydrophobic (preferably Leu), and Yaa (Ala or Ser) and Zaa (Gly or Ala) have small, neutral side chains.. The protein operates within protein modification; lipoprotein biosynthesis (signal peptide cleavage). Functionally, this protein specifically catalyzes the removal of signal peptides from prolipoproteins. The protein is Lipoprotein signal peptidase of Burkholderia vietnamiensis (strain G4 / LMG 22486) (Burkholderia cepacia (strain R1808)).